The following is a 305-amino-acid chain: uncharacterized protein (305 aa).

Residues 208 to 236 are disordered; the sequence is SYAQSPAVKKKKWRHSGGKKNNPRENHID. Positions 215-225 are enriched in basic residues; that stretch reads VKKKKWRHSGG.

This is an uncharacterized protein from Bacillus subtilis (strain 168).